Consider the following 65-residue polypeptide: Large ribosomal subunit protein bL35 (65 aa).

The segment covering methionine 1–alanine 11 has biased composition (basic residues). The interval methionine 1–arginine 25 is disordered.

It belongs to the bacterial ribosomal protein bL35 family.

This is Large ribosomal subunit protein bL35 from Nitratidesulfovibrio vulgaris (strain ATCC 29579 / DSM 644 / CCUG 34227 / NCIMB 8303 / VKM B-1760 / Hildenborough) (Desulfovibrio vulgaris).